A 248-amino-acid polypeptide reads, in one-letter code: Adenosylcobinamide-GDP ribazoletransferase (248 aa).

Transmembrane regions (helical) follow at residues 36-56 (FFLP…YLGL), 59-79 (FLPS…ITGG), 114-134 (GTIA…SLVL), 137-157 (YSIA…FLCL), 170-190 (IFIG…VLVL), and 199-219 (ATII…LLCL).

Belongs to the CobS family. Requires Mg(2+) as cofactor.

It is found in the cell membrane. It carries out the reaction alpha-ribazole + adenosylcob(III)inamide-GDP = adenosylcob(III)alamin + GMP + H(+). The enzyme catalyses alpha-ribazole 5'-phosphate + adenosylcob(III)inamide-GDP = adenosylcob(III)alamin 5'-phosphate + GMP + H(+). It participates in cofactor biosynthesis; adenosylcobalamin biosynthesis; adenosylcobalamin from cob(II)yrinate a,c-diamide: step 7/7. In terms of biological role, joins adenosylcobinamide-GDP and alpha-ribazole to generate adenosylcobalamin (Ado-cobalamin). Also synthesizes adenosylcobalamin 5'-phosphate from adenosylcobinamide-GDP and alpha-ribazole 5'-phosphate. The polypeptide is Adenosylcobinamide-GDP ribazoletransferase (Clostridium botulinum (strain Loch Maree / Type A3)).